The following is a 395-amino-acid chain: E3 ubiquitin-protein ligase RDUF1 (395 aa).

Disordered regions lie at residues 1-22 (MMPNSRSATITPTTESTTTTTT) and 107-130 (PVIVLHGGGGGGAGERVENEEGDG). Low complexity predominate over residues 9–22 (TITPTTESTTTTTT). Residues 121–130 (ERVENEEGDG) are compositionally biased toward basic and acidic residues. The RING-type; atypical zinc-finger motif lies at 215–256 (CAVCTEVFEAGIEGREMPCKHIFHGDCIVPWLSIRNSCPVCR).

As to expression, expressed in root tips, leaf tips, junction of carpels and pedicels, stigma, anthers, pollen, vasculature of sepals and petals, immature seeds and embryos.

Its subcellular location is the cytoplasm. It is found in the cytosol. The protein localises to the nucleus. The enzyme catalyses S-ubiquitinyl-[E2 ubiquitin-conjugating enzyme]-L-cysteine + [acceptor protein]-L-lysine = [E2 ubiquitin-conjugating enzyme]-L-cysteine + N(6)-ubiquitinyl-[acceptor protein]-L-lysine.. It participates in protein modification; protein ubiquitination. In terms of biological role, E3 ubiquitin-protein ligase involved in the positive regulation of abscisic acid-dependent drought stress responses. Involved in the positive regulation of responses to salt and osmotic stresses during seed germination and early seedling development. Possesses E3 ubiquitin ligase activity in vitro. The protein is E3 ubiquitin-protein ligase RDUF1 of Arabidopsis thaliana (Mouse-ear cress).